The chain runs to 585 residues: MNRILSVTLCLFFIYLYIYKTYGKVKNTDEGLSNIYGAKYYLRSGLFNEKNGKGQKYEDLEEEKEGENDDEEDSNSEESNNDEENELIKGQEGVEQETHGSEDEVSNGREDKVSNGGEDEVSNGGEDEVSNGREDKVSNGGEDEVSNGREDKVSNGGEDEVSNGREDKVSNGGEDEVSNGREDKVSNGGEDEVSNGREDKVSNGREDKVSNGGEDEVSNGREDKVSNGREDKVSNGGEDEVSNGREDKVSNGGEDEVSNGREDKVSNGGEDEVSNGREDKVSNGREDEVSNGREDKVSNGGEDEVSNGREDKVSNGGEDEVSNGREDKVSNGREDKVSNGGEDEVSNGREDKVSNGGEDEVSNGREDKVSNGREDKVSNGREDEVSNGREDKVSNGGEDEVSNGREDKVSNGREDKVSNGGEDEVSNGREDKVSNGGEDEVSNGREDKVSNGREDKVSNGREDKVSNGGEDEVSNGGEDEVSNGREDKVSNGGEDEVSNGREDKVSNGGEDEVSNGREDKVSNGGEDEVSNGREDKVSNGREDEVSNGREDKGGAGTDGELSHNSESHTKNKKSKNSIINMLIGM.

The signal sequence occupies residues 1–23 (MNRILSVTLCLFFIYLYIYKTYG). The segment at 51–585 (NGKGQKYEDL…NSIINMLIGM (535 aa)) is disordered. Residues 59–85 (DLEEEKEGENDDEEDSNSEESNNDEEN) show a composition bias toward acidic residues. Positions 96–113 (QETHGSEDEVSNGREDKV) are enriched in basic and acidic residues. 56 consecutive repeat copies span residues 102 to 109 (EDEVSNGR), 110 to 117 (EDKVSNGG), 118 to 125 (EDEVSNGG), 126 to 133 (EDEVSNGR), 134 to 141 (EDKVSNGG), 142 to 149 (EDEVSNGR), 150 to 157 (EDKVSNGG), 158 to 165 (EDEVSNGR), 166 to 173 (EDKVSNGG), 174 to 181 (EDEVSNGR), 182 to 189 (EDKVSNGG), 190 to 197 (EDEVSNGR), 198 to 205 (EDKVSNGR), 206 to 213 (EDKVSNGG), 214 to 221 (EDEVSNGR), 222 to 229 (EDKVSNGR), 230 to 237 (EDKVSNGG), 238 to 245 (EDEVSNGR), 246 to 253 (EDKVSNGG), 254 to 261 (EDEVSNGR), 262 to 269 (EDKVSNGG), 270 to 277 (EDEVSNGR), 278 to 285 (EDKVSNGR), 286 to 293 (EDEVSNGR), 294 to 301 (EDKVSNGG), 302 to 309 (EDEVSNGR), 310 to 317 (EDKVSNGG), 318 to 325 (EDEVSNGR), 326 to 333 (EDKVSNGR), 334 to 341 (EDKVSNGG), 342 to 349 (EDEVSNGR), 350 to 357 (EDKVSNGG), 358 to 365 (EDEVSNGR), 366 to 373 (EDKVSNGR), 374 to 381 (EDKVSNGR), 382 to 389 (EDEVSNGR), 390 to 397 (EDKVSNGG), 398 to 405 (EDEVSNGR), 406 to 413 (EDKVSNGR), 414 to 421 (EDKVSNGG), 422 to 429 (EDEVSNGR), 430 to 437 (EDKVSNGG), 438 to 445 (EDEVSNGR), 446 to 453 (EDKVSNGR), 454 to 461 (EDKVSNGR), 462 to 469 (EDKVSNGG), 470 to 477 (EDEVSNGG), 478 to 485 (EDEVSNGR), 486 to 493 (EDKVSNGG), 494 to 501 (EDEVSNGR), 502 to 509 (EDKVSNGG), 510 to 517 (EDEVSNGR), 518 to 525 (EDKVSNGG), 526 to 533 (EDEVSNGR), 534 to 541 (EDKVSNGR), and 542 to 549 (EDEVSNGR). The segment at 102-549 (EDEVSNGRED…GREDEVSNGR (448 aa)) is 56 X 8 AA tandem repeats of E-D-[EK]-V-S-N-G-[RG]. Positions 117-129 (GEDEVSNGGEDEV) are enriched in acidic residues. 2 stretches are compositionally biased toward basic and acidic residues: residues 194 to 209 (SNGREDKVSNGREDKV) and 218 to 233 (SNGREDKVSNGREDKV). A compositionally biased stretch (basic and acidic residues) spans 274-297 (SNGREDKVSNGREDEVSNGREDKV). Positions 322-337 (SNGREDKVSNGREDKV) are enriched in basic and acidic residues. Basic and acidic residues-rich tracts occupy residues 362-393 (SNGREDKVSNGREDKVSNGREDEVSNGREDKV) and 402-417 (SNGREDKVSNGREDKV). A compositionally biased stretch (basic and acidic residues) spans 442-465 (SNGREDKVSNGREDKVSNGREDKV). Positions 469–481 (GEDEVSNGGEDEV) are enriched in acidic residues. 2 stretches are compositionally biased toward basic and acidic residues: residues 530 to 553 (SNGREDKVSNGREDEVSNGREDKG) and 560 to 569 (ELSHNSESHT). Residues 576 to 585 (NSIINMLIGM) show a composition bias toward low complexity.

The protein localises to the parasitophorous vacuole. S antigens are soluble heat-stable proteins present in the sera of some infected individuals. This is S-antigen protein from Plasmodium falciparum (isolate 3D7).